Reading from the N-terminus, the 127-residue chain is Serum amyloid A protein (127 aa).

The signal sequence occupies residues 1–18 (MKLLTSLFLLSLVLCVNS). The residue at position 19 (Gln-19) is a Pyrrolidone carboxylic acid. The interval 89–127 (GGSSGRGVEDSMADQEANRWGRSGKDPNRYRPKGLDPKY) is disordered. Residues 104–127 (EANRWGRSGKDPNRYRPKGLDPKY) show a composition bias toward basic and acidic residues.

The protein belongs to the SAA family. In terms of tissue distribution, expressed by the liver; secreted in plasma.

It is found in the secreted. Functionally, major acute phase reactant. Apolipoprotein of the HDL complex. In Notamacropus eugenii (Tammar wallaby), this protein is Serum amyloid A protein (SAA1).